The chain runs to 383 residues: MTAAITYEHIKTCKQSGARLGRVHTPHGTIETPMFMPVGTLATVKTMSPEDLKAMDAQIILSNTYHLWLRPGEEIIKEAGGLHQFMNWDKPILTDSGGFQVFSLSDLRKITEEGVHFRNHLSGEKLFLSPEKAMQIQHVLGSDIMMAFDECPPYPADHSYMKASVERTSRWAERCLAEHKRSGKDSVQGLFGIIQGGEYEDLRKQSANDLTALDFPGYAVGGLSVGEPKDVMNHVLEFTTPLMPEDKPRYLMGVGSPDSLIDGAIRGIDMFDCVLPTRIARNGTCMTSAGRLVVRNAKYARDFSPLDEKCDCHVCRTYSRAYIRHLIKCEETFGFRLTTYHNLYFLLNLMKQVRQAIMDDCLLDFREQFFEEYGFNKENARNF.

The active-site Proton acceptor is the D95. Substrate contacts are provided by residues 95-99 (DSGGF), D149, Q195, and G222. The RNA binding stretch occupies residues 253–259 (GVGSPDS). D272 (nucleophile) is an active-site residue. The tract at residues 277–281 (TRIAR) is RNA binding; important for wobble base 34 recognition. Residues C310, C312, C315, and H341 each coordinate Zn(2+).

It belongs to the queuine tRNA-ribosyltransferase family. As to quaternary structure, homodimer. Within each dimer, one monomer is responsible for RNA recognition and catalysis, while the other monomer binds to the replacement base PreQ1. It depends on Zn(2+) as a cofactor.

The catalysed reaction is 7-aminomethyl-7-carbaguanine + guanosine(34) in tRNA = 7-aminomethyl-7-carbaguanosine(34) in tRNA + guanine. Its pathway is tRNA modification; tRNA-queuosine biosynthesis. In terms of biological role, catalyzes the base-exchange of a guanine (G) residue with the queuine precursor 7-aminomethyl-7-deazaguanine (PreQ1) at position 34 (anticodon wobble position) in tRNAs with GU(N) anticodons (tRNA-Asp, -Asn, -His and -Tyr). Catalysis occurs through a double-displacement mechanism. The nucleophile active site attacks the C1' of nucleotide 34 to detach the guanine base from the RNA, forming a covalent enzyme-RNA intermediate. The proton acceptor active site deprotonates the incoming PreQ1, allowing a nucleophilic attack on the C1' of the ribose to form the product. After dissociation, two additional enzymatic reactions on the tRNA convert PreQ1 to queuine (Q), resulting in the hypermodified nucleoside queuosine (7-(((4,5-cis-dihydroxy-2-cyclopenten-1-yl)amino)methyl)-7-deazaguanosine). The protein is Queuine tRNA-ribosyltransferase of Shouchella clausii (strain KSM-K16) (Alkalihalobacillus clausii).